The following is a 513-amino-acid chain: Putative ribose/galactose/methyl galactoside import ATP-binding protein 2 (513 aa).

2 ABC transporter domains span residues 24–260 (LSAE…VGRE) and 270–510 (VPIG…VMEL). 56 to 63 (GENGAGKS) serves as a coordination point for ATP.

The protein belongs to the ABC transporter superfamily. Carbohydrate importer 2 (CUT2) (TC 3.A.1.2) family.

Its subcellular location is the cell inner membrane. It catalyses the reaction D-ribose(out) + ATP + H2O = D-ribose(in) + ADP + phosphate + H(+). The catalysed reaction is D-galactose(out) + ATP + H2O = D-galactose(in) + ADP + phosphate + H(+). In terms of biological role, part of an ABC transporter complex involved in carbohydrate import. Could be involved in ribose, galactose and/or methyl galactoside import. Responsible for energy coupling to the transport system. The polypeptide is Putative ribose/galactose/methyl galactoside import ATP-binding protein 2 (Rhizobium etli (strain ATCC 51251 / DSM 11541 / JCM 21823 / NBRC 15573 / CFN 42)).